A 197-amino-acid chain; its full sequence is MDIAILNTGCANLTSIQVAIKKLGYDSIVTSDPSIVLKSKKIFLPGVGTALAAMEQLHKKNLINTLKKLTQPILGICLGMQIFSQFSEECKGVKTIGIFDNCFTHLLKSSNLPLPHMGWNHIVFNNLHPLFKNIDKKERFYFVHSYIIPLNKYTLAKTKYGVSFSSVMQKNNFFGVQFHPEKSGDAGAQLLKNFLEI.

The Glutamine amidotransferase type-1 domain occupies 2–197 (DIAILNTGCA…AQLLKNFLEI (196 aa)). Cysteine 77 serves as the catalytic Nucleophile. Residues histidine 179 and glutamate 181 contribute to the active site.

Heterodimer of HisH and HisF.

Its subcellular location is the cytoplasm. It carries out the reaction 5-[(5-phospho-1-deoxy-D-ribulos-1-ylimino)methylamino]-1-(5-phospho-beta-D-ribosyl)imidazole-4-carboxamide + L-glutamine = D-erythro-1-(imidazol-4-yl)glycerol 3-phosphate + 5-amino-1-(5-phospho-beta-D-ribosyl)imidazole-4-carboxamide + L-glutamate + H(+). The enzyme catalyses L-glutamine + H2O = L-glutamate + NH4(+). It participates in amino-acid biosynthesis; L-histidine biosynthesis; L-histidine from 5-phospho-alpha-D-ribose 1-diphosphate: step 5/9. IGPS catalyzes the conversion of PRFAR and glutamine to IGP, AICAR and glutamate. The HisH subunit catalyzes the hydrolysis of glutamine to glutamate and ammonia as part of the synthesis of IGP and AICAR. The resulting ammonia molecule is channeled to the active site of HisF. This chain is Imidazole glycerol phosphate synthase subunit HisH (hisH), found in Buchnera aphidicola subsp. Schizaphis graminum (strain Sg).